The following is a 322-amino-acid chain: Probable 5-dehydro-4-deoxyglucarate dehydratase 2 (322 aa).

This sequence belongs to the DapA family.

The enzyme catalyses 5-dehydro-4-deoxy-D-glucarate + H(+) = 2,5-dioxopentanoate + CO2 + H2O. The protein operates within carbohydrate acid metabolism; D-glucarate degradation; 2,5-dioxopentanoate from D-glucarate: step 2/2. In Streptomyces coelicolor (strain ATCC BAA-471 / A3(2) / M145), this protein is Probable 5-dehydro-4-deoxyglucarate dehydratase 2.